A 256-amino-acid polypeptide reads, in one-letter code: MAVGKNKRLSKGKKGLKKKTQDPFARKDWYGIKAPAPFNVRDVGKTLVNRTTGLKNANDALKGRIFEVSLADLQKDEDHSFRKVKLRVDEIQGKNCLTNFHGLDFTSDKLRSLVRKWQTLIEANITVKTTDDYLLRLFAIAFTKRRPNQVKKTTYAASSQIRAIRRKMTEIIQREASSCTLTQLTSKLIPEVIGREIEKATQGIYPLQNVHIRKVKLLKQPKFDLGALMSLHGESGSDEAGQKVEREFKETVLESV.

Over residues 1–18 (MAVGKNKRLSKGKKGLKK) the composition is skewed to basic residues. Positions 1 to 22 (MAVGKNKRLSKGKKGLKKKTQD) are disordered. Ala-2 carries the post-translational modification N-acetylalanine; partial.

This sequence belongs to the eukaryotic ribosomal protein eS1 family. In terms of assembly, component of the small ribosomal subunit (SSU). Mature N.crassa ribosomes consist of a small (40S) and a large (60S) subunit. The 40S small subunit contains 1 molecule of ribosomal RNA (18S rRNA) and at least 32 different proteins. The large 60S subunit contains 3 rRNA molecules (26S, 5.8S and 5S rRNA) and at least 42 different proteins.

It is found in the cytoplasm. Functionally, component of the ribosome, a large ribonucleoprotein complex responsible for the synthesis of proteins in the cell. The small ribosomal subunit (SSU) binds messenger RNAs (mRNAs) and translates the encoded message by selecting cognate aminoacyl-transfer RNA (tRNA) molecules. The large subunit (LSU) contains the ribosomal catalytic site termed the peptidyl transferase center (PTC), which catalyzes the formation of peptide bonds, thereby polymerizing the amino acids delivered by tRNAs into a polypeptide chain. The nascent polypeptides leave the ribosome through a tunnel in the LSU and interact with protein factors that function in enzymatic processing, targeting, and the membrane insertion of nascent chains at the exit of the ribosomal tunnel. The polypeptide is Small ribosomal subunit protein eS1 (rps1) (Neurospora crassa (strain ATCC 24698 / 74-OR23-1A / CBS 708.71 / DSM 1257 / FGSC 987)).